Consider the following 268-residue polypeptide: Undecaprenyl-diphosphatase (268 aa).

A run of 8 helical transmembrane segments spans residues 1–21, 39–59, 85–105, 110–130, 144–164, 187–207, 221–241, and 247–267; these read MSLI…FLPI, QGPL…LVYF, ALLV…LVAF, ALRS…PLWL, MSFK…IPGA, FSML…LIEL, DGLI…AVLM, and IGFL…LVFF.

This sequence belongs to the UppP family.

Its subcellular location is the cell inner membrane. It catalyses the reaction di-trans,octa-cis-undecaprenyl diphosphate + H2O = di-trans,octa-cis-undecaprenyl phosphate + phosphate + H(+). In terms of biological role, catalyzes the dephosphorylation of undecaprenyl diphosphate (UPP). Confers resistance to bacitracin. The sequence is that of Undecaprenyl-diphosphatase from Maricaulis maris (strain MCS10) (Caulobacter maris).